We begin with the raw amino-acid sequence, 236 residues long: UPF0502 protein BamMC406_5439 (236 aa).

This sequence belongs to the UPF0502 family.

The sequence is that of UPF0502 protein BamMC406_5439 from Burkholderia ambifaria (strain MC40-6).